A 397-amino-acid chain; its full sequence is MTKEKLILAYSGGLDTSVAIAWLKKDYDVIAVCMDVGEGKNLEFIHDKALSIGAIESHVLDVKEEFAQEYVLPALQAHAYYEQKYPLVSALSRPLISKKLVEMAHKTGATTIAHGCTGKGNDQVRFEVAIAALDPSLKVVAPVREWKWAREEEIIFAKENGVPVPADLDSPYSVDQNLWGRANECGVLENPWNEAPEDTFGITTSPENAPDTPEYVDIEFKAGIPVAVNGEKLSLANLIQRLNVIAGKHGVGRIDHVENRLVGIKSREIYECPGAITLLTAHKEIEDLTLVREVSHFKPIVSNELSNLIYNGLWFNPATDALKAYLAQTQAVVNGTAKVKLYKGSAKVVARKSPNSLYDEDLATYTSADTFDQDAAVGFIKLWGLPTKVNAEIHKKS.

9–17 (AYSGGLDTS) serves as a coordination point for ATP. Tyr-85 contacts L-citrulline. Gly-115 is a binding site for ATP. 3 residues coordinate L-aspartate: Thr-117, Asn-121, and Asp-122. Asn-121 provides a ligand contact to L-citrulline. 4 residues coordinate L-citrulline: Arg-125, Ser-173, Glu-258, and Tyr-270.

This sequence belongs to the argininosuccinate synthase family. Type 1 subfamily. Homotetramer.

Its subcellular location is the cytoplasm. It carries out the reaction L-citrulline + L-aspartate + ATP = 2-(N(omega)-L-arginino)succinate + AMP + diphosphate + H(+). It participates in amino-acid biosynthesis; L-arginine biosynthesis; L-arginine from L-ornithine and carbamoyl phosphate: step 2/3. The protein is Argininosuccinate synthase of Streptococcus suis (strain 05ZYH33).